Reading from the N-terminus, the 338-residue chain is Ketol-acid reductoisomerase (NADP(+)) (338 aa).

The 181-residue stretch at 3–183 (IELLYDADAD…GGARAGVIPT (181 aa)) folds into the KARI N-terminal Rossmann domain. NADP(+)-binding positions include 26–29 (YGSQ), Arg-49, Ser-52, Ser-54, and 84–87 (DTSQ). Residue His-109 is part of the active site. Gly-135 serves as a coordination point for NADP(+). Residues 184–329 (TFEAETVTDL…AKLRDLMSWV (146 aa)) enclose the KARI C-terminal knotted domain. Positions 192, 196, 228, and 232 each coordinate Mg(2+). Ser-253 is a binding site for substrate.

Belongs to the ketol-acid reductoisomerase family. The cofactor is Mg(2+).

It carries out the reaction (2R)-2,3-dihydroxy-3-methylbutanoate + NADP(+) = (2S)-2-acetolactate + NADPH + H(+). It catalyses the reaction (2R,3R)-2,3-dihydroxy-3-methylpentanoate + NADP(+) = (S)-2-ethyl-2-hydroxy-3-oxobutanoate + NADPH + H(+). It functions in the pathway amino-acid biosynthesis; L-isoleucine biosynthesis; L-isoleucine from 2-oxobutanoate: step 2/4. The protein operates within amino-acid biosynthesis; L-valine biosynthesis; L-valine from pyruvate: step 2/4. Functionally, involved in the biosynthesis of branched-chain amino acids (BCAA). Catalyzes an alkyl-migration followed by a ketol-acid reduction of (S)-2-acetolactate (S2AL) to yield (R)-2,3-dihydroxy-isovalerate. In the isomerase reaction, S2AL is rearranged via a Mg-dependent methyl migration to produce 3-hydroxy-3-methyl-2-ketobutyrate (HMKB). In the reductase reaction, this 2-ketoacid undergoes a metal-dependent reduction by NADPH to yield (R)-2,3-dihydroxy-isovalerate. This chain is Ketol-acid reductoisomerase (NADP(+)), found in Corynebacterium glutamicum (strain ATCC 13032 / DSM 20300 / JCM 1318 / BCRC 11384 / CCUG 27702 / LMG 3730 / NBRC 12168 / NCIMB 10025 / NRRL B-2784 / 534).